Reading from the N-terminus, the 78-residue chain is Large ribosomal subunit protein uL23 (78 aa).

This sequence belongs to the universal ribosomal protein uL23 family. Part of the 50S ribosomal subunit. Contacts protein L29.

Functionally, binds to 23S rRNA. One of the proteins that surrounds the polypeptide exit tunnel on the outside of the ribosome. In Nanoarchaeum equitans (strain Kin4-M), this protein is Large ribosomal subunit protein uL23.